Here is a 1708-residue protein sequence, read N- to C-terminus: Non-structural polyprotein pORF1 (1708 aa).

The 185-residue stretch at 56–240 (VFRPEVLWNH…HDVSILRAWI (185 aa)) folds into the Alphavirus-like MT domain. Residues 60 to 240 (EVLWNHPIQR…HDVSILRAWI (181 aa)) are methyltransferase. The interval 241–439 (RTTKIVGDHP…FYAQCRRWLS (199 aa)) is Y-domain. Cysteine 434 and cysteine 481 are joined by a disulfide. The segment at 442–509 (FHLDPRVLVF…EAYEGSEVDP (68 aa)) is putative protease. Residues 510-691 (AEPAHLDVSG…FSPGHIWESA (182 aa)) are zinc-binding. Residues histidine 671, glutamate 673, and histidine 686 each coordinate Zn(2+). The interval 714–793 (FSPPEAAAPV…PPTPPPSRTR (80 aa)) is hinge. A Macro domain is found at 790–936 (SRTRRLLYTY…LYLTEPAAAW (147 aa)). The X-domain stretch occupies residues 800 to 957 (PDGAKVYAGS…TITEDTARTA (158 aa)). The region spanning 949–1097 (ITEDTARTAN…RPELAPTSWW (149 aa)) is the (+)RNA virus helicase ATP-binding domain. The segment at 975 to 1219 (GCTISPGIVH…ISDVIVNNFF (245 aa)) is NTPase/helicase. Position 990–997 (990–997 (GVPGSGKS)) interacts with ATP. Residues 1098–1231 (HVTHRCPADV…GGEVGHHRPS (134 aa)) form the (+)RNA virus helicase C-terminal domain. The tract at residues 1222–1708 (GGEVGHHRPS…LTNSIIQRVE (487 aa)) is RNA-directed RNA polymerase. One can recognise a RdRp catalytic domain in the interval 1469-1580 (CMVFENDFSE…LCSDYRQSRN (112 aa)).

Belongs to the hepevirus non-structural polyprotein family. The protease domain interacts with host EIF2AK4 (via C-terminus); this interaction inhibits dimerization of EIF2AK4 and prevents EIF2AK4-mediated phosphorylation of host EIF2A. It depends on Mg(2+) as a cofactor. Post-translationally, ORF1 polyprotein does not seem to be processed into distinct enzymatic domains by a viral protease belonging to ORF1, but could be processed by a host serine protease like thrombin.

Its subcellular location is the host cytoplasm. It is found in the host perinuclear region. The enzyme catalyses RNA(n) + a ribonucleoside 5'-triphosphate = RNA(n+1) + diphosphate. It catalyses the reaction GTP + S-adenosyl-L-methionine = N(7)-methyl-GTP + S-adenosyl-L-homocysteine. Putative protease: Inhibited by chymostatin. Functionally, methyltransferase: Displays a capping enzyme activity. This function is necessary since all viral RNAs are synthesized in the cytoplasm, and host capping enzymes are restricted to the nucleus. The enzymatic reaction involves a covalent link between 7-methyl-GMP and the methyltransferase, whereas eukaryotic capping enzymes form a covalent complex only with GMP. Methyltransferase catalyzes transfer of a methyl group from S-adenosylmethionine to GTP and GDP to yield m(7)GTP or m(7)GDP. GDP is a better substrate than GTP. This enzyme also displays guanylyltransferase activity to form a covalent complex, methyltransferase-m(7)GMP, from which 7-methyl-GMP is transferred to the mRNA to create the cap structure. In terms of biological role, Y-domain: Indispensable for virus replication. Putative protease: The putative protease domain although necessary for replication of the virus may not be a protease but rather a structural Zn(2+)-binding domain. Inhibits induction of IFN-beta by MDA5 and RIG-I pathways and down-regulates the expression of MDA5. Its function is as follows. NTPase/helicase: Multi-functional protein that exhibits NTPase and RNA unwinding activities. Hydrolyzes all NTPs efficiently and unwinds RNA duplexes containing 5' overhangs. Possesses a sequence independent RNA-5'-triphosphatase (RTPase) activity suggestive of its role in forming viral cap structure. Also participates in viral genome replication, RNA translocation and genome packaging/unpackaging. Functionally, RNA-directed RNA polymerase: Plays an essential role in the virus replication. Binds to the 3'-end of the genomic RNA to initiate viral replication. In Bandicota bengalensis (lesser bandicoot rat), this protein is Non-structural polyprotein pORF1.